Consider the following 285-residue polypeptide: Putative pyruvate, phosphate dikinase regulatory protein (285 aa).

165–172 (GVSRTSKT) contributes to the ADP binding site.

Belongs to the pyruvate, phosphate/water dikinase regulatory protein family. PDRP subfamily.

The enzyme catalyses N(tele)-phospho-L-histidyl/L-threonyl-[pyruvate, phosphate dikinase] + ADP = N(tele)-phospho-L-histidyl/O-phospho-L-threonyl-[pyruvate, phosphate dikinase] + AMP + H(+). The catalysed reaction is N(tele)-phospho-L-histidyl/O-phospho-L-threonyl-[pyruvate, phosphate dikinase] + phosphate + H(+) = N(tele)-phospho-L-histidyl/L-threonyl-[pyruvate, phosphate dikinase] + diphosphate. Bifunctional serine/threonine kinase and phosphorylase involved in the regulation of the pyruvate, phosphate dikinase (PPDK) by catalyzing its phosphorylation/dephosphorylation. This Lactobacillus delbrueckii subsp. bulgaricus (strain ATCC 11842 / DSM 20081 / BCRC 10696 / JCM 1002 / NBRC 13953 / NCIMB 11778 / NCTC 12712 / WDCM 00102 / Lb 14) protein is Putative pyruvate, phosphate dikinase regulatory protein.